A 591-amino-acid polypeptide reads, in one-letter code: MVDVPYDRIADIPPAEVPDVELYHPRSWWTRYVFSQDAKVIAIQYSLTASAIGLVALVLSWLMRLQLGFPGTFSFIDANQYLQFITMHGMIMVIYLLTALFLGGFGNYLIPLMVGARDMVFPYVNMLSYWVYLLAVLVLASAFFVPGGPTGAGWTLYPPQAILSGTPGQDWGIVLMLSSLILFIIGFTMGGLNYVVTVLQARTRGMTLMRLPLTVWGIFTATVMALLAFPALFVGSVMLLLDRLLGTSFFMPTLVEMGQLSKYGGGSPLLFQHLFWFFGHPEVYIVALPAFGIVSDLISTHARKNIFGYRMMVWAIVAIGALSFVVWAHHMYVSGMYPYFGFFFATTTLIIAIPTAIKVYNWVLTLWHGDIHLTVPMLFALGFIITFVNGGLTGLFLGNVVVDVPLSDTMFVVAHFHMVMGVAPIMVVLGAIYHWYPKVTGRMLNDVLGKFHFWVTFLGAYLIFFPMHYLGLLGVPRRYFELGDAAFIPPSAHSLNAFITVVALTVGFAQMVFLFNLVWSLFEGEPSGGNPWRATTLEWQTPETPPGHGNWGKQLPIVYRWAYDYSVPGAAQDFIPQNQPPPTGAVQGVAP.

The chain crosses the membrane as a helical span at residues 40 to 60; sequence VIAIQYSLTASAIGLVALVLS. His-88 is a heme b binding site. 11 consecutive transmembrane segments (helical) span residues 90-110, 126-146, 172-192, 215-235, 274-294, 313-333, 337-357, 377-397, 412-432, 453-473, and 498-518; these read MIMV…NYLI, MLSY…FFVP, GIVL…MGGL, VWGI…LFVG, LFWF…FGIV, VWAI…HMYV, YPYF…PTAI, MLFA…GLFL, VVAH…LGAI, FWVT…LGLL, and FITV…FNLV. Cu cation contacts are provided by His-280, Tyr-284, His-329, and His-330. The 1'-histidyl-3'-tyrosine (His-Tyr) cross-link spans 280–284; that stretch reads HPEVY. The heme b site is built by His-415 and His-417.

It belongs to the heme-copper respiratory oxidase family. As to quaternary structure, this alternate cytochrome c oxidase consists of a subunit I and two cytochromes c. Equivalents to subunit 2 and 3 are not present in this complex.

It localises to the cell membrane. The enzyme catalyses 4 Fe(II)-[cytochrome c] + O2 + 8 H(+)(in) = 4 Fe(III)-[cytochrome c] + 2 H2O + 4 H(+)(out). In terms of biological role, cytochrome c oxidase is the component of the respiratory chain that catalyzes the reduction of oxygen to water. Subunits 1-3 form the functional core of the enzyme complex. Co I is the catalytic subunit of the enzyme. Electrons originating in cytochrome c are transferred via the copper A center of subunit 2 and a low-spin heme of subunit 1 to the bimetallic center formed by a high-spin heme and copper B. This is Alternative cytochrome c oxidase subunit 1 (coxN) from Bradyrhizobium diazoefficiens (strain JCM 10833 / BCRC 13528 / IAM 13628 / NBRC 14792 / USDA 110).